The chain runs to 265 residues: Putative cysteine-rich receptor-like protein kinase At4g11521 (265 aa).

An N-terminal signal peptide occupies residues 1-23; it reads MMLNTLFLPIFLFFLITFDYVST. Gnk2-homologous domains lie at 24–122 and 128–241; these read QTCF…NISF and MEPS…LYPF. N-linked (GlcNAc...) asparagine glycans are attached at residues N34, N102, and N119. N-linked (GlcNAc...) asparagine glycosylation is present at N247.

The protein belongs to the protein kinase superfamily. Ser/Thr protein kinase family. CRK subfamily.

Its subcellular location is the secreted. The chain is Putative cysteine-rich receptor-like protein kinase At4g11521 from Arabidopsis thaliana (Mouse-ear cress).